The primary structure comprises 127 residues: Large ribosomal subunit protein bL17 (127 aa).

It belongs to the bacterial ribosomal protein bL17 family. Part of the 50S ribosomal subunit. Contacts protein L32.

This is Large ribosomal subunit protein bL17 from Lactobacillus helveticus (strain DPC 4571).